Consider the following 86-residue polypeptide: Small ribosomal subunit protein bS16 (86 aa).

It belongs to the bacterial ribosomal protein bS16 family.

This is Small ribosomal subunit protein bS16 from Nostoc punctiforme (strain ATCC 29133 / PCC 73102).